Consider the following 290-residue polypeptide: DegV domain-containing protein MG450 (290 aa).

Positions 3–289 (IAFLVDSVSN…INSYAFLIQT (287 aa)) constitute a DegV domain. Hexadecanoate-binding residues include Thr65 and Ser97.

Its function is as follows. May bind long-chain fatty acids, such as palmitate, and may play a role in lipid transport or fatty acid metabolism. This chain is DegV domain-containing protein MG450, found in Mycoplasma genitalium (strain ATCC 33530 / DSM 19775 / NCTC 10195 / G37) (Mycoplasmoides genitalium).